A 318-amino-acid polypeptide reads, in one-letter code: Inner membrane protein YbhN (318 aa).

At Met-1–Lys-13 the chain is on the periplasmic side. A helical transmembrane segment spans residues Ile-14–Val-34. The Cytoplasmic portion of the chain corresponds to Asp-35–Ala-50. A helical membrane pass occupies residues Leu-51–Leu-71. Residues Ala-72–Val-85 are Periplasmic-facing. A helical membrane pass occupies residues Met-86 to Ile-106. At Gly-107–Arg-125 the chain is on the cytoplasmic side. A helical transmembrane segment spans residues Ile-126–Phe-146. The Periplasmic portion of the chain corresponds to Thr-147–Arg-165. Residues Ile-166–Lys-186 form a helical membrane-spanning segment. The Cytoplasmic portion of the chain corresponds to His-187–Ala-205. A helical transmembrane segment spans residues Leu-206 to Leu-226. The Periplasmic portion of the chain corresponds to Leu-227–Tyr-233. 2 helical membrane-spanning segments follow: residues Phe-234–Ala-254 and Gly-255–Gly-275. Residues Thr-276–Ile-277 lie on the Periplasmic side of the membrane. The chain crosses the membrane as a helical span at residues Ile-278–Ile-298. The Cytoplasmic portion of the chain corresponds to Cys-299–Met-318.

The protein to Synechocystis PCC 6803 slr0712.

Its subcellular location is the cell inner membrane. In Escherichia coli (strain K12), this protein is Inner membrane protein YbhN (ybhN).